Reading from the N-terminus, the 315-residue chain is MTLDQLRIASRRSQLAMVQTNWVRDELQRAHPDLAITIEAMATQGDKILDVALAKIGDKGLFTKELEAQMLLGHAEIAVHSLKDLPTNLPEGLILGCITEREDPSDALVVNEKNQIHKLETLPEGSVVGTSSLRRLAQLRYHYPHLVFKDVRGNVITRLEKLDSGEYDCLILAAAGLQRLGFANRIHQLIPTDISLHAVGQGALGIECVSGQQKVLDILKTLEHESTSKRCLAERSFLRELEGGCQVPIGVRTEINNNELILEGMVASLDGKRLIRDIKKGSVSSAEEIGIDLANELKGRGAGEILEEIFKSARA.

Cys-245 is subject to S-(dipyrrolylmethanemethyl)cysteine.

It belongs to the HMBS family. In terms of assembly, monomer. The cofactor is dipyrromethane.

The catalysed reaction is 4 porphobilinogen + H2O = hydroxymethylbilane + 4 NH4(+). It functions in the pathway porphyrin-containing compound metabolism; protoporphyrin-IX biosynthesis; coproporphyrinogen-III from 5-aminolevulinate: step 2/4. It participates in porphyrin-containing compound metabolism; chlorophyll biosynthesis. Tetrapolymerization of the monopyrrole PBG into the hydroxymethylbilane pre-uroporphyrinogen in several discrete steps. This is Porphobilinogen deaminase from Prochlorococcus marinus (strain NATL1A).